The primary structure comprises 419 residues: MEVENGEGQVQVHLKTKQEQYAVPDVPYAIEGSVSTTELNIFLNALLQNKGAESVDFDFLVFDEYLRGRLCDHLREKAISFEDSIEIEYVERFPAPEPQDCLLHDDWVSAVKASGKWILTGCYDNTLNIWTYKGKHKLTIPGHTAPIKAVDWISLDNENGRFVSTSQDQTAMMWQWNIASNAVECVSVCKGHERGVDSVCVSPDAQRFATGSWDTMLKIWSAELEDAGESTAKRAKESGVRTPRMTLQGHRESISAVQWMDNNTLLTGSWDHTLKVWDLNLEGIKTEISTNKSIFDASHSKLNNLIVTASADKNLRLYDARTNQGSVVRSTYLGHNAWVQTVMWSITEEFLFVSGAYDNQNKLWDCRSPKAPLYDLLGHGEKVLDIDWSNPKYIVSGGADNTVRVFKSSKATVENMETK.

The segment at 10 to 91 is ubiquitin-like (UBL) domain; that stretch reads VQVHLKTKQE…EDSIEIEYVE (82 aa). 7 WD repeats span residues 103–140, 142–184, 191–230, 249–287, 289–328, 334–374, and 378–416; these read LHDD…KLTI, GHTA…NAVE, GHER…AGES, GHRE…IKTE, STNK…GSVV, GHNA…APLY, and GHGE…VENM.

This sequence belongs to the WD repeat WDR12/YTM1 family.

It localises to the nucleus. The protein resides in the nucleolus. It is found in the nucleoplasm. Functionally, required for maturation of ribosomal RNAs and formation of the large ribosomal subunit. This chain is Ribosome biogenesis protein WDR12 homolog, found in Drosophila mojavensis (Fruit fly).